Consider the following 328-residue polypeptide: DNA-directed RNA polymerase subunit alpha (328 aa).

The tract at residues 1–231 (MIYQMQMPAK…EHVTFFANFS (231 aa)) is alpha N-terminal domain (alpha-NTD). Positions 247–328 (DEFETMRRLL…MDITRYQMKG (82 aa)) are alpha C-terminal domain (alpha-CTD).

Belongs to the RNA polymerase alpha chain family. In terms of assembly, homodimer. The RNAP catalytic core consists of 2 alpha, 1 beta, 1 beta' and 1 omega subunit. When a sigma factor is associated with the core the holoenzyme is formed, which can initiate transcription.

The enzyme catalyses RNA(n) + a ribonucleoside 5'-triphosphate = RNA(n+1) + diphosphate. DNA-dependent RNA polymerase catalyzes the transcription of DNA into RNA using the four ribonucleoside triphosphates as substrates. This Chlorobium luteolum (strain DSM 273 / BCRC 81028 / 2530) (Pelodictyon luteolum) protein is DNA-directed RNA polymerase subunit alpha.